Reading from the N-terminus, the 349-residue chain is Ribosomal RNA small subunit methyltransferase H (349 aa).

Residues 34–36 (GGH), Asp-54, Phe-81, Asp-102, and Gln-109 contribute to the S-adenosyl-L-methionine site. The tract at residues 328–349 (SRTGSVQHGQAKHKGVVQRGGS) is disordered.

It belongs to the methyltransferase superfamily. RsmH family.

Its subcellular location is the cytoplasm. It carries out the reaction cytidine(1402) in 16S rRNA + S-adenosyl-L-methionine = N(4)-methylcytidine(1402) in 16S rRNA + S-adenosyl-L-homocysteine + H(+). Functionally, specifically methylates the N4 position of cytidine in position 1402 (C1402) of 16S rRNA. The chain is Ribosomal RNA small subunit methyltransferase H from Dehalococcoides mccartyi (strain ATCC BAA-2100 / JCM 16839 / KCTC 5957 / BAV1).